A 199-amino-acid chain; its full sequence is V-type proton ATPase subunit E (199 aa).

The protein belongs to the V-ATPase E subunit family.

In terms of biological role, produces ATP from ADP in the presence of a proton gradient across the membrane. The chain is V-type proton ATPase subunit E from Clostridium botulinum (strain Okra / Type B1).